Reading from the N-terminus, the 133-residue chain is ATP synthase epsilon chain (133 aa).

The tract at residues 103–133 is disordered; the sequence is VSQMEGQEPSTEKIKAQQNFNRARARVQATK.

The protein belongs to the ATPase epsilon chain family. As to quaternary structure, F-type ATPases have 2 components, CF(1) - the catalytic core - and CF(0) - the membrane proton channel. CF(1) has five subunits: alpha(3), beta(3), gamma(1), delta(1), epsilon(1). CF(0) has three main subunits: a, b and c.

The protein resides in the cellular thylakoid membrane. Functionally, produces ATP from ADP in the presence of a proton gradient across the membrane. The polypeptide is ATP synthase epsilon chain (Prochlorococcus marinus (strain MIT 9313)).